A 497-amino-acid chain; its full sequence is Probable cytosol aminopeptidase (497 aa).

2 residues coordinate Mn(2+): Lys267 and Asp272. Lys279 is an active-site residue. Residues Asp290, Asp349, and Glu351 each contribute to the Mn(2+) site. Residue Arg353 is part of the active site.

This sequence belongs to the peptidase M17 family. Mn(2+) serves as cofactor.

It is found in the cytoplasm. It catalyses the reaction Release of an N-terminal amino acid, Xaa-|-Yaa-, in which Xaa is preferably Leu, but may be other amino acids including Pro although not Arg or Lys, and Yaa may be Pro. Amino acid amides and methyl esters are also readily hydrolyzed, but rates on arylamides are exceedingly low.. The catalysed reaction is Release of an N-terminal amino acid, preferentially leucine, but not glutamic or aspartic acids.. Its function is as follows. Presumably involved in the processing and regular turnover of intracellular proteins. Catalyzes the removal of unsubstituted N-terminal amino acids from various peptides. The sequence is that of Probable cytosol aminopeptidase from Syntrophotalea carbinolica (strain DSM 2380 / NBRC 103641 / GraBd1) (Pelobacter carbinolicus).